The chain runs to 428 residues: C4-dicarboxylate transport protein (428 aa).

8 helical membrane-spanning segments follow: residues 8 to 28 (SLYFQVLTAIAIGILLGHFYP), 44 to 64 (LIKMIIAPVIFCTVVTGIAGM), 76 to 96 (VALLYFEIVSTIALIIGLIIV), 142 to 162 (IGAFASGNILQVLLFAVLFGF), 184 to 204 (VIFGIINMIMRLAPIGAFGAM), 222 to 242 (LIICFYITCILFVVLVLGSIA), 326 to 346 (IVHQITLLIVLLLSSKGAAGV), and 352 to 372 (IVLAATLSAVGHLPVAGLALI).

This sequence belongs to the dicarboxylate/amino acid:cation symporter (DAACS) (TC 2.A.23) family.

It is found in the cell inner membrane. Responsible for the transport of dicarboxylates such as succinate, fumarate, and malate from the periplasm across the membrane. This chain is C4-dicarboxylate transport protein, found in Escherichia coli O127:H6 (strain E2348/69 / EPEC).